The primary structure comprises 482 residues: Exodeoxyribonuclease 7 large subunit (482 aa).

The segment at 457–482 (TLDTGGAPAKPASKPKQKPPEQGSLF) is disordered.

Belongs to the XseA family. As to quaternary structure, heterooligomer composed of large and small subunits.

It is found in the cytoplasm. The enzyme catalyses Exonucleolytic cleavage in either 5'- to 3'- or 3'- to 5'-direction to yield nucleoside 5'-phosphates.. Its function is as follows. Bidirectionally degrades single-stranded DNA into large acid-insoluble oligonucleotides, which are then degraded further into small acid-soluble oligonucleotides. This Ruegeria pomeroyi (strain ATCC 700808 / DSM 15171 / DSS-3) (Silicibacter pomeroyi) protein is Exodeoxyribonuclease 7 large subunit.